A 109-amino-acid polypeptide reads, in one-letter code: Ferredoxin (109 aa).

2 consecutive 4Fe-4S ferredoxin-type domains span residues 2 to 30 (TYVVNDECVKCKYTDCVDVCPVDCFYEGE) and 31 to 60 (FMLVINPDECIDCGVCVPDCPIDAIKPESP). Cys-9 and Cys-17 together coordinate [3Fe-4S] cluster. The [4Fe-4S] cluster site is built by Cys-21, Cys-40, Cys-43, and Cys-46. Cys-50 contacts [3Fe-4S] cluster.

Requires [4Fe-4S] cluster as cofactor. The cofactor is [3Fe-4S] cluster.

Functionally, ferredoxins are iron-sulfur proteins that transfer electrons in a wide variety of metabolic reactions. The sequence is that of Ferredoxin (fdxA) from Rickettsia felis (strain ATCC VR-1525 / URRWXCal2) (Rickettsia azadi).